Reading from the N-terminus, the 457-residue chain is Multidrug resistance protein MdtK (457 aa).

12 consecutive transmembrane segments (helical) span residues Leu-11 to Val-31, Ala-46 to Leu-66, Trp-93 to Ile-113, Ala-127 to Leu-147, Gly-160 to Tyr-180, Leu-188 to Met-208, Leu-243 to Val-263, Leu-283 to Phe-301, Tyr-316 to Phe-336, Leu-357 to Val-377, Ile-387 to Gly-407, and Pro-418 to Leu-438.

This sequence belongs to the multi antimicrobial extrusion (MATE) (TC 2.A.66.1) family. MdtK subfamily.

It is found in the cell inner membrane. Multidrug efflux pump that functions probably as a Na(+)/drug antiporter. This chain is Multidrug resistance protein MdtK, found in Yersinia pseudotuberculosis serotype IB (strain PB1/+).